Consider the following 62-residue polypeptide: Large ribosomal subunit protein uL29 (62 aa).

This sequence belongs to the universal ribosomal protein uL29 family.

The sequence is that of Large ribosomal subunit protein uL29 from Desulfatibacillum aliphaticivorans.